Consider the following 199-residue polypeptide: NAD(P)H dehydrogenase (quinone) (199 aa).

One can recognise a Flavodoxin-like domain in the interval 4–190; it reads VLVLYYSAYG…DAARFQGAHV (187 aa). FMN contacts are provided by residues 10-15 and 78-80; these read SAYGHI and TRY. Y12 lines the NAD(+) pocket. W98 contributes to the substrate binding site. FMN-binding positions include 113 to 119 and H134; that span reads SSATQHG.

It belongs to the WrbA family. FMN is required as a cofactor.

It catalyses the reaction a quinone + NADH + H(+) = a quinol + NAD(+). The catalysed reaction is a quinone + NADPH + H(+) = a quinol + NADP(+). The protein is NAD(P)H dehydrogenase (quinone) of Sinorhizobium fredii (strain NBRC 101917 / NGR234).